The primary structure comprises 542 residues: Carboxypeptidase Y homolog A (542 aa).

Positions 1–17 (MRVLPATLLVGAASAAV) are cleaved as a signal peptide. A propeptide spanning residues 18–123 (PPLQQVLGRP…KLEAYDLRIK (106 aa)) is cleaved from the precursor. Cystine bridges form between Cys-178–Cys-418, Cys-312–Cys-326, Cys-336–Cys-359, Cys-343–Cys-352, and Cys-381–Cys-388. An N-linked (GlcNAc...) asparagine glycan is attached at Asn-209. Residue Ser-265 is part of the active site. The active site involves Asp-457. N-linked (GlcNAc...) asparagine glycosylation occurs at Asn-508. His-519 is a catalytic residue.

Belongs to the peptidase S10 family.

It localises to the vacuole. The enzyme catalyses Release of a C-terminal amino acid with broad specificity.. Its function is as follows. Vacuolar carboxypeptidase involved in degradation of small peptides. Digests preferentially peptides containing an aliphatic or hydrophobic residue in P1' position, as well as methionine, leucine or phenylalanine in P1 position of ester substrate. In Aspergillus oryzae (strain ATCC 42149 / RIB 40) (Yellow koji mold), this protein is Carboxypeptidase Y homolog A (cpyA).